An 89-amino-acid chain; its full sequence is UPF0297 protein OB2008 (89 aa).

Belongs to the UPF0297 family.

This chain is UPF0297 protein OB2008, found in Oceanobacillus iheyensis (strain DSM 14371 / CIP 107618 / JCM 11309 / KCTC 3954 / HTE831).